The sequence spans 211 residues: ATP phosphoribosyltransferase (211 aa).

It belongs to the ATP phosphoribosyltransferase family. Short subfamily. As to quaternary structure, heteromultimer composed of HisG and HisZ subunits.

It localises to the cytoplasm. It carries out the reaction 1-(5-phospho-beta-D-ribosyl)-ATP + diphosphate = 5-phospho-alpha-D-ribose 1-diphosphate + ATP. Its pathway is amino-acid biosynthesis; L-histidine biosynthesis; L-histidine from 5-phospho-alpha-D-ribose 1-diphosphate: step 1/9. Functionally, catalyzes the condensation of ATP and 5-phosphoribose 1-diphosphate to form N'-(5'-phosphoribosyl)-ATP (PR-ATP). Has a crucial role in the pathway because the rate of histidine biosynthesis seems to be controlled primarily by regulation of HisG enzymatic activity. In Pseudomonas aeruginosa (strain ATCC 15692 / DSM 22644 / CIP 104116 / JCM 14847 / LMG 12228 / 1C / PRS 101 / PAO1), this protein is ATP phosphoribosyltransferase (hisG).